Here is a 163-residue protein sequence, read N- to C-terminus: Nucleotide-binding protein RER_17110 (163 aa).

The protein belongs to the YajQ family.

Nucleotide-binding protein. The polypeptide is Nucleotide-binding protein RER_17110 (Rhodococcus erythropolis (strain PR4 / NBRC 100887)).